Here is a 274-residue protein sequence, read N- to C-terminus: Glutamate racemase (274 aa).

Substrate is bound by residues 10–11 (DS) and 42–43 (YG). Cysteine 73 acts as the Proton donor/acceptor in catalysis. Residue 74–75 (NT) participates in substrate binding. The active-site Proton donor/acceptor is cysteine 184. Position 185–186 (185–186 (TH)) interacts with substrate.

The protein belongs to the aspartate/glutamate racemases family.

It carries out the reaction L-glutamate = D-glutamate. Its pathway is cell wall biogenesis; peptidoglycan biosynthesis. Provides the (R)-glutamate required for cell wall biosynthesis. The polypeptide is Glutamate racemase (Latilactobacillus sakei subsp. sakei (strain 23K) (Lactobacillus sakei subsp. sakei)).